The following is a 389-amino-acid chain: Mannitol-1-phosphate 5-dehydrogenase (389 aa).

5 to 16 provides a ligand contact to NAD(+); it reads AIQFGGGNIGRG. The active site involves K214.

The protein belongs to the mannitol dehydrogenase family. In terms of assembly, monomer.

The enzyme catalyses D-mannitol 1-phosphate + NAD(+) = beta-D-fructose 6-phosphate + NADH + H(+). In terms of biological role, catalyzes the NAD(H)-dependent interconversion of D-fructose 6-phosphate and D-mannitol 1-phosphate in the mannitol metabolic pathway. The polypeptide is Mannitol-1-phosphate 5-dehydrogenase (Talaromyces marneffei (strain ATCC 18224 / CBS 334.59 / QM 7333) (Penicillium marneffei)).